A 147-amino-acid chain; its full sequence is Hemoglobin subunit epsilon (147 aa).

The Globin domain maps to 3-147 (HFTAEEKAII…VATALAHKYH (145 aa)). Phosphoserine occurs at positions 14 and 51. Heme b-binding residues include His64 and His93.

It belongs to the globin family. As to quaternary structure, heterotetramer of two alpha chains and two epsilon chains in early embryonic hemoglobin Gower-2; two zeta chains and two epsilon chains in early embryonic hemoglobin Gower-1. In terms of tissue distribution, red blood cells.

Its function is as follows. The epsilon chain is a beta-type chain of early mammalian embryonic hemoglobin. The protein is Hemoglobin subunit epsilon (HBE1) of Otolemur crassicaudatus (Brown greater galago).